We begin with the raw amino-acid sequence, 507 residues long: Bifunctional purine biosynthesis protein PurH (507 aa).

In terms of domain architecture, MGS-like spans 1 to 149 (MSESKRIKTA…KNYNDVIIVA (149 aa)).

Belongs to the PurH family.

The enzyme catalyses (6R)-10-formyltetrahydrofolate + 5-amino-1-(5-phospho-beta-D-ribosyl)imidazole-4-carboxamide = 5-formamido-1-(5-phospho-D-ribosyl)imidazole-4-carboxamide + (6S)-5,6,7,8-tetrahydrofolate. The catalysed reaction is IMP + H2O = 5-formamido-1-(5-phospho-D-ribosyl)imidazole-4-carboxamide. The protein operates within purine metabolism; IMP biosynthesis via de novo pathway; 5-formamido-1-(5-phospho-D-ribosyl)imidazole-4-carboxamide from 5-amino-1-(5-phospho-D-ribosyl)imidazole-4-carboxamide (10-formyl THF route): step 1/1. It functions in the pathway purine metabolism; IMP biosynthesis via de novo pathway; IMP from 5-formamido-1-(5-phospho-D-ribosyl)imidazole-4-carboxamide: step 1/1. The chain is Bifunctional purine biosynthesis protein PurH from Bacteroides thetaiotaomicron (strain ATCC 29148 / DSM 2079 / JCM 5827 / CCUG 10774 / NCTC 10582 / VPI-5482 / E50).